Consider the following 227-residue polypeptide: Superoxide dismutase [Cu-Zn] (227 aa).

An N-terminal signal peptide occupies residues 1 to 19; it reads MPKLLPPVVLAGCVVALGA. Cysteine 20 carries the N-palmitoyl cysteine lipid modification. Residue cysteine 20 is the site of S-diacylglycerol cysteine attachment. A disordered region spans residues 23-55; it reads PQHASSLPGTTPAVWTGSPSPSGAGAAEAAPAA. The span at 39-55 shows a compositional bias: low complexity; it reads GSPSPSGAGAAEAAPAA. Cu cation-binding residues include histidine 103 and histidine 105. Cysteines 110 and 221 form a disulfide. Zn(2+) is bound at residue aspartate 145. Histidine 182 contacts Cu cation.

It belongs to the Cu-Zn superoxide dismutase family. Cu cation is required as a cofactor. Zn(2+) serves as cofactor.

The protein localises to the cell membrane. The enzyme catalyses 2 superoxide + 2 H(+) = H2O2 + O2. Destroys radicals which are normally produced within the cells and which are toxic to biological systems. May play a role in favoring mycobacterial survival in phagocytes. This is Superoxide dismutase [Cu-Zn] (sodC) from Mycolicibacterium paratuberculosis (strain ATCC BAA-968 / K-10) (Mycobacterium paratuberculosis).